The following is a 146-amino-acid chain: Acetyl-CoA decarbonylase/synthase complex subunit epsilon (146 aa).

The protein belongs to the CdhB family. In terms of assembly, heterotetramer of two alpha and two epsilon subunits. The ACDS complex is made up of alpha, epsilon, beta, gamma and delta subunits with a probable stoichiometry of (alpha(2)epsilon(2))(4)-beta(8)-(gamma(1)delta(1))(8).

Its function is as follows. Part of a complex that catalyzes the reversible cleavage of acetyl-CoA, allowing autotrophic growth from CO(2). The alpha-epsilon subcomponent functions as a carbon monoxide dehydrogenase. The precise role of the epsilon subunit is unclear; it may have a stabilizing role within the alpha(2)epsilon(2) component and/or be involved in electron transfer to FAD during a potential FAD-mediated CO oxidation. The polypeptide is Acetyl-CoA decarbonylase/synthase complex subunit epsilon (Methanocaldococcus jannaschii (strain ATCC 43067 / DSM 2661 / JAL-1 / JCM 10045 / NBRC 100440) (Methanococcus jannaschii)).